The following is a 118-amino-acid chain: Large ribosomal subunit protein bL17 (118 aa).

This sequence belongs to the bacterial ribosomal protein bL17 family. In terms of assembly, part of the 50S ribosomal subunit. Contacts protein L32.

This is Large ribosomal subunit protein bL17 from Thermus thermophilus (strain ATCC BAA-163 / DSM 7039 / HB27).